The primary structure comprises 401 residues: MKTRNPIVVQRKNGPPRFLHVNFNQDQECFSCATEKGFEIYNTDPIQCSVKRRFSHNGMSGIGYTRMLYRTNYIGLVGGGASPRFSTNKIAIWDDIQQRDSVSIRFNSPVHELFLSRQYIVVVLAQSIDVYTFSGSPSRVCPVISNIHNGIADFVTCSKMRRASGPQDVEHALSQKHVIAGILAYPSGIRPGQIHIADLSNIQTPSVADASATHLPTSIIKAHKNPIHLVKLSPQGTMVATCSVEGTLIRVFSIASGSLIHEFRRGLDRALIYDMQWNGKGDKLAVVSDKFTLHIFQINEDLDKRHLLKGWFPKVKYLQGVWSMCSTKLDRSLLTHDEDTCKVGWIGDEALSLLWQKSGMWEKYVIMEKLREYKVDETLHSGAPDGRRQLYDLVRESWRQL.

WD repeat units lie at residues 222–262 (AHKN…LIHE) and 267–306 (LDRA…DKRH).

The protein belongs to the WD repeat PROPPIN family.

The protein resides in the vacuole membrane. It localises to the cytoplasmic vesicle membrane. Involved in mitochondrial or peroxisomal functions and amino acid signaling pathways. The protein is SVP1-like protein 2 (HSV2) of Eremothecium gossypii (strain ATCC 10895 / CBS 109.51 / FGSC 9923 / NRRL Y-1056) (Yeast).